A 161-amino-acid polypeptide reads, in one-letter code: Regulator of ribonuclease activity A (161 aa).

The protein belongs to the RraA family. Homotrimer. Binds to both RNA-binding sites in the C-terminal region of Rne and to RhlB.

It localises to the cytoplasm. Functionally, globally modulates RNA abundance by binding to RNase E (Rne) and regulating its endonucleolytic activity. Can modulate Rne action in a substrate-dependent manner by altering the composition of the degradosome. Modulates RNA-binding and helicase activities of the degradosome. This is Regulator of ribonuclease activity A from Shigella dysenteriae serotype 1 (strain Sd197).